A 501-amino-acid polypeptide reads, in one-letter code: Cyclin-dependent kinase 19 (501 aa).

Met1 carries the N-acetylmethionine modification. The 315-residue stretch at 21-335 folds into the Protein kinase domain; that stretch reads EYEGCKVGRG…SEQALQDPYF (315 aa). ATP is bound by residues 27 to 35 and Lys52; that span reads VGRGTYGHV. The active-site Proton acceptor is the Asp151. The disordered stretch occupies residues 362 to 501; that stretch reads DEPEEKGDKN…YHSSHQTHRY (140 aa). Low complexity predominate over residues 371–392; sequence NQPQQQNPHQQPAAPAQQTAAP. The span at 408–421 shows a compositional bias: gly residues; the sequence is TAGGATAGGGGAGA. Phosphoserine is present on Ser449. A compositionally biased stretch (low complexity) spans 467 to 495; sequence YQSSVQGSSQSQSTLGYSSSQQSTQYHSS.

Belongs to the protein kinase superfamily. CMGC Ser/Thr protein kinase family. CDC2/CDKX subfamily.

The protein localises to the cytoplasm. It is found in the perinuclear region. It localises to the nucleus. The catalysed reaction is L-seryl-[protein] + ATP = O-phospho-L-seryl-[protein] + ADP + H(+). It catalyses the reaction L-threonyl-[protein] + ATP = O-phospho-L-threonyl-[protein] + ADP + H(+). The sequence is that of Cyclin-dependent kinase 19 (Cdk19) from Mus musculus (Mouse).